A 141-amino-acid chain; its full sequence is Nucleoside diphosphate kinase (141 aa).

Residues Lys11, Phe59, Arg87, Thr93, Arg104, and Asn114 each coordinate ATP. His117 serves as the catalytic Pros-phosphohistidine intermediate.

The protein belongs to the NDK family. As to quaternary structure, homotetramer. Requires Mg(2+) as cofactor.

It is found in the cytoplasm. It catalyses the reaction a 2'-deoxyribonucleoside 5'-diphosphate + ATP = a 2'-deoxyribonucleoside 5'-triphosphate + ADP. It carries out the reaction a ribonucleoside 5'-diphosphate + ATP = a ribonucleoside 5'-triphosphate + ADP. Functionally, major role in the synthesis of nucleoside triphosphates other than ATP. The ATP gamma phosphate is transferred to the NDP beta phosphate via a ping-pong mechanism, using a phosphorylated active-site intermediate. The polypeptide is Nucleoside diphosphate kinase (Histophilus somni (strain 2336) (Haemophilus somnus)).